The sequence spans 630 residues: Transcription factor MYC1 (630 aa).

2 disordered regions span residues 356–398 and 430–463; these read FGDS…NNEE and VKEA…EAER. Residues 440 to 449 are compositionally biased toward basic residues; it reads KPRKRGRKPA. The span at 450–463 shows a compositional bias: basic and acidic residues; it reads NGREEPLNHVEAER. Residues 453–466 form a basic motif; degenerate region; sequence EEPLNHVEAERQRR. Residues 453-502 enclose the bHLH domain; sequence EEPLNHVEAERQRREKLNQRFYALRAVVPNVSKMDKASLLGDAIAYINEL. The tract at residues 467 to 502 is helix-loop-helix motif; it reads EKLNQRFYALRAVVPNVSKMDKASLLGDAIAYINEL.

Highly expressed in trichomes and at lower levels in leaves and flowers. Expressed at low levels in roots, stems, leaves, flowers and fruits.

It localises to the nucleus. Its function is as follows. Transcriptional activator that binds to the G-box motif (5'-AACGTG-3') found in a number of promoters of jasmonate-induced genes. Transcription activator involved in the transcriptional regulation of terpene biosynthesis in glandular trichomes. Binds to the promoter of the linalool synthase TPS5 and promotes TPS5 gene transactivation. Acts synergistically with EOT1 in the transactivation of TPS5. Involved in type VI glandular trichome development. Involved in the activation of terpene synthases required for volatile mono- and sesquiterpenes synthesis by the glandular cells of type VI trichomes. The chain is Transcription factor MYC1 from Solanum lycopersicum (Tomato).